The sequence spans 300 residues: Histone deacetylase HDT3 (300 aa).

Over residues 98–112 the composition is skewed to acidic residues; it reads EDEMDLDSEDEDEEL. The segment at 98–300 is disordered; the sequence is EDEMDLDSED…AHSKAKHGGK (203 aa). Residues 119–132 are compositionally biased toward basic and acidic residues; it reads ENGKADEKKQKSQE. Positions 151 to 197 are enriched in acidic residues; it reads DDDSDEDETDDSDEDETDDSDEGLSPEEGDDDSSDEDDTSDDEEEDT. Residues 198–211 show a composition bias toward basic and acidic residues; that stretch reads PTPKKPEVGKKRAA. Over residues 265–275 the composition is skewed to low complexity; that stretch reads SPKSAPKSGVP. Residues 274–297 form a C2H2-type zinc finger; the sequence is VPCKSCSKSFISETAPQAHSKAKH. Residues 279–290 are compositionally biased toward polar residues; it reads CSKSFISETAPQ.

This sequence belongs to the histone deacetylase HD2 family. Multimer. Possibly forms a homotrimer with HDT1 and/or HDT2.

It is found in the nucleus. Its subcellular location is the nucleolus. Its function is as follows. Mediates the deacetylation of lysine residues on the N-terminal part of the core histones (H2A, H2B, H3 and H4). Histone deacetylation gives a tag for epigenetic repression and plays an important role in transcriptional regulation, cell cycle progression and developmental events. The sequence is that of Histone deacetylase HDT3 (HDT3) from Zea mays (Maize).